The sequence spans 288 residues: 4-diphosphocytidyl-2-C-methyl-D-erythritol kinase (288 aa).

Residue K8 is part of the active site. An ATP-binding site is contributed by 90–100 (PLEAGLAGGSA). The active site involves D132.

This sequence belongs to the GHMP kinase family. IspE subfamily.

The catalysed reaction is 4-CDP-2-C-methyl-D-erythritol + ATP = 4-CDP-2-C-methyl-D-erythritol 2-phosphate + ADP + H(+). Its pathway is isoprenoid biosynthesis; isopentenyl diphosphate biosynthesis via DXP pathway; isopentenyl diphosphate from 1-deoxy-D-xylulose 5-phosphate: step 3/6. Its function is as follows. Catalyzes the phosphorylation of the position 2 hydroxy group of 4-diphosphocytidyl-2C-methyl-D-erythritol. The polypeptide is 4-diphosphocytidyl-2-C-methyl-D-erythritol kinase (Carboxydothermus hydrogenoformans (strain ATCC BAA-161 / DSM 6008 / Z-2901)).